Consider the following 670-residue polypeptide: Protein-glutamine gamma-glutamyltransferase 4 (670 aa).

2 N-linked (GlcNAc...) asparagine glycosylation sites follow: N151 and N219. Residue C255 is part of the active site. N288 is a glycosylation site (N-linked (GlcNAc...) asparagine). Active-site residues include H314 and D337. Positions 377, 379, 429, and 434 each coordinate Ca(2+). N-linked (GlcNAc...) asparagine glycosylation is found at N456 and N491.

Belongs to the transglutaminase superfamily. Transglutaminase family. In terms of assembly, homodimer. It depends on Ca(2+) as a cofactor. In terms of tissue distribution, expressed in the coagulating gland and in the dorsal part of the prostate. Not expressed in the brain, heart, kidney, liver, lung, muscle, pancreas, spleen, stomach, testis and thymus.

It is found in the secreted. The enzyme catalyses L-glutaminyl-[protein] + L-lysyl-[protein] = [protein]-L-lysyl-N(6)-5-L-glutamyl-[protein] + NH4(+). Functionally, associated with the mammalian reproductive process. Plays an important role in the formation of the seminal coagulum through the cross-linking of specific proteins present in the seminal plasma. Transglutaminase is also required to stabilize the copulatory plug. The chain is Protein-glutamine gamma-glutamyltransferase 4 from Mus musculus (Mouse).